A 34-amino-acid polypeptide reads, in one-letter code: Cytochrome b6-f complex subunit 7 (34 aa).

A helical membrane pass occupies residues 9–27 (AILSFGLIFVGWGLGALLL).

Belongs to the PetM family. In terms of assembly, the 4 large subunits of the cytochrome b6-f complex are cytochrome b6, subunit IV (17 kDa polypeptide, PetD), cytochrome f and the Rieske protein, while the 4 small subunits are PetG, PetL, PetM and PetN. The complex functions as a dimer.

It localises to the cellular thylakoid membrane. Its function is as follows. Component of the cytochrome b6-f complex, which mediates electron transfer between photosystem II (PSII) and photosystem I (PSI), cyclic electron flow around PSI, and state transitions. The chain is Cytochrome b6-f complex subunit 7 from Nostoc punctiforme (strain ATCC 29133 / PCC 73102).